The following is a 308-amino-acid chain: uncharacterized protein (308 aa).

Residues 1-60 (MNYSLKQLKVFVTVAQEKSFSRAGERIGLSQSAVSHSVKELENHTGVRLLDRTTREVVLT) enclose the HTH lysR-type domain. A DNA-binding region (H-T-H motif) is located at residues 20–39 (FSRAGERIGLSQSAVSHSVK).

Belongs to the LysR transcriptional regulatory family.

This is an uncharacterized protein from Shigella flexneri.